Reading from the N-terminus, the 374-residue chain is U-box domain-containing protein 8 (374 aa).

The region spanning 4 to 79 (DLPNDFRCPI…LNFAHVSLKE (76 aa)) is the U-box domain. ARM repeat units lie at residues 126–165 (SSIR…NLSL), 167–206 (DDNK…SLAV), 208–248 (EVNK…ALCS), 250–288 (PDNR…KCRG), and 289–327 (GREE…CLCC).

Expressed in the whole plant.

It catalyses the reaction S-ubiquitinyl-[E2 ubiquitin-conjugating enzyme]-L-cysteine + [acceptor protein]-L-lysine = [E2 ubiquitin-conjugating enzyme]-L-cysteine + N(6)-ubiquitinyl-[acceptor protein]-L-lysine.. It functions in the pathway protein modification; protein ubiquitination. Its function is as follows. Functions as an E3 ubiquitin ligase. Involved in the age-dependent pseudo-self-compatibility process. The polypeptide is U-box domain-containing protein 8 (PUB8) (Arabidopsis thaliana (Mouse-ear cress)).